The primary structure comprises 259 residues: Nodulation protein J (259 aa).

One can recognise an ABC transmembrane type-2 domain in the interval alanine 30–arginine 256. 6 helical membrane-spanning segments follow: residues isoleucine 32–valine 52, alanine 64–isoleucine 84, alanine 116–leucine 136, tryptophan 141–leucine 161, tyrosine 174–phenylalanine 194, and isoleucine 228–valine 248.

Belongs to the ABC-2 integral membrane protein family. Lipooligosaccharide exporter (TC 3.A.1.102) subfamily. In terms of assembly, the complex is composed of two ATP-binding proteins (NodI) and two transmembrane proteins (NodJ).

The protein resides in the cell inner membrane. Its function is as follows. Part of the ABC transporter complex NodIJ involved in the export of the nodulation factors (Nod factors), the bacterial signal molecules that induce symbiosis and subsequent nodulation induction. Nod factors are LCO (lipo-chitin oligosaccharide), a modified beta-1,4-linked N-acetylglucosamine oligosaccharide. This subunit encodes the transporter. This chain is Nodulation protein J (nodJ), found in Rhizobium leguminosarum bv. viciae.